Reading from the N-terminus, the 635-residue chain is Transaminated amino acid decarboxylase (635 aa).

K588 is covalently cross-linked (Glycyl lysine isopeptide (Lys-Gly) (interchain with G-Cter in ubiquitin)).

Belongs to the TPP enzyme family. Mg(2+) is required as a cofactor. Thiamine diphosphate serves as cofactor.

The protein resides in the cytoplasm. It catalyses the reaction 4-methyl-2-oxopentanoate + H(+) = 3-methylbutanal + CO2. The enzyme catalyses (S)-3-methyl-2-oxopentanoate + H(+) = 2-methylbutanal + CO2. The catalysed reaction is indole-3-pyruvate + H(+) = indole-3-acetaldehyde + CO2. It carries out the reaction 3-phenylpyruvate + H(+) = 2-phenylacetaldehyde + CO2. It catalyses the reaction 4-methylsulfanyl-2-oxobutanoate + H(+) = 3-methylsulfanylpropanal + CO2. The enzyme catalyses 3-(4-hydroxyphenyl)pyruvate + H(+) = (4-hydroxyphenyl)acetaldehyde + CO2. The protein operates within amino-acid degradation; Ehrlich pathway. In terms of biological role, one of five 2-oxo acid decarboxylases (PDC1, PDC5, PDC6, ARO10, and THI3) involved in amino acid catabolism. The enzyme catalyzes the decarboxylation of amino acids, which, in a first step, have been transaminated to the corresponding 2-oxo acids (alpha-keto-acids). In a third step, the resulting aldehydes are reduced to alcohols, collectively referred to as fusel oils or alcohols. Its preferred substrates are the transaminated amino acids derived from phenylalanine (phenylpyruvate), tryptophan (3-(indol-3-yl)pyruvate), and probably tyrosine (4-hydroxyphenylpyruvate), but also isoleucine ((3S)-3-methyl-2-oxopentanoate, also alpha-keto-beta-methylvalerate) and methionine (4-methylthio-2-oxobutanoate), whereas transaminated leucine (4-methyl-2-oxopentanoate, also alpha-keto-isocaproate) is a low efficiency substrate and transaminated valine and pyruvate are no substrates. In analogy to the pyruvate decarboxylases the enzyme may in a side-reaction catalyze condensation (or carboligation) reactions leading to the formation of 2-hydroxy ketone, collectively called acyloins. This chain is Transaminated amino acid decarboxylase (ARO10), found in Saccharomyces cerevisiae (strain ATCC 204508 / S288c) (Baker's yeast).